Here is a 626-residue protein sequence, read N- to C-terminus: tRNA uridine 5-carboxymethylaminomethyl modification enzyme MnmG (626 aa).

FAD is bound at residue G13–G18. G273 to F287 contributes to the NAD(+) binding site.

This sequence belongs to the MnmG family. As to quaternary structure, homodimer. Heterotetramer of two MnmE and two MnmG subunits. Requires FAD as cofactor.

It is found in the cytoplasm. Functionally, NAD-binding protein involved in the addition of a carboxymethylaminomethyl (cmnm) group at the wobble position (U34) of certain tRNAs, forming tRNA-cmnm(5)s(2)U34. The protein is tRNA uridine 5-carboxymethylaminomethyl modification enzyme MnmG of Acinetobacter baumannii (strain AYE).